Here is a 463-residue protein sequence, read N- to C-terminus: UDP-N-acetylmuramoyl-L-alanyl-D-glutamate--2,6-diaminopimelate ligase (463 aa).

Position 21 (T21) interacts with UDP-N-acetyl-alpha-D-muramoyl-L-alanyl-D-glutamate. 94 to 100 contacts ATP; that stretch reads GTNGKTT. Residues 137 to 138, S164, Q170, and R172 each bind UDP-N-acetyl-alpha-D-muramoyl-L-alanyl-D-glutamate; that span reads TT. Position 204 is an N6-carboxylysine (K204). Meso-2,6-diaminopimelate contacts are provided by residues R358, 382–385, G433, and E437; that span reads DNPR. The short motif at 382–385 is the Meso-diaminopimelate recognition motif element; it reads DNPR.

This sequence belongs to the MurCDEF family. MurE subfamily. Mg(2+) is required as a cofactor. Post-translationally, carboxylation is probably crucial for Mg(2+) binding and, consequently, for the gamma-phosphate positioning of ATP.

The protein resides in the cytoplasm. It catalyses the reaction UDP-N-acetyl-alpha-D-muramoyl-L-alanyl-D-glutamate + meso-2,6-diaminopimelate + ATP = UDP-N-acetyl-alpha-D-muramoyl-L-alanyl-gamma-D-glutamyl-meso-2,6-diaminopimelate + ADP + phosphate + H(+). The protein operates within cell wall biogenesis; peptidoglycan biosynthesis. Its function is as follows. Catalyzes the addition of meso-diaminopimelic acid to the nucleotide precursor UDP-N-acetylmuramoyl-L-alanyl-D-glutamate (UMAG) in the biosynthesis of bacterial cell-wall peptidoglycan. This chain is UDP-N-acetylmuramoyl-L-alanyl-D-glutamate--2,6-diaminopimelate ligase, found in Helicobacter hepaticus (strain ATCC 51449 / 3B1).